Reading from the N-terminus, the 71-residue chain is Protein CYSTEINE-RICH TRANSMEMBRANE MODULE 3 (71 aa).

Residues 30 to 49 (VMMKDSPQTVQPPHEGQSKG) form a disordered region. A helical membrane pass occupies residues 48–64 (KGSGGFLRGCLAAMCCC).

It belongs to the CYSTM1 family. In terms of assembly, heterodimers. Interacts with CYSTM7 and WIH1/CYSTM13. As to expression, mostly expressed in leaves and flowers and, to a lower extent, in stems, siliques, shoots and roots.

The protein localises to the cell membrane. Its subcellular location is the cytoplasm. It localises to the mitochondrion. Negatively regulates salt stress responses and Na(+) homeostasis. Prevents Na(+) efflux, disturbs reactive oxygen species (ROS) homeostasis, and represses the expression of nuclear salt stress-responsive genes. Involved in resistance to abiotic stress. The protein is Protein CYSTEINE-RICH TRANSMEMBRANE MODULE 3 of Arabidopsis thaliana (Mouse-ear cress).